The primary structure comprises 388 residues: Chorismate synthase (388 aa).

Residues Arg-39 and Arg-45 each coordinate NADP(+). FMN is bound by residues 130-132 (RSS), 251-252 (NA), Gly-296, 311-315 (KPIPT), and Arg-337.

The protein belongs to the chorismate synthase family. In terms of assembly, homotetramer. Requires FMNH2 as cofactor.

It catalyses the reaction 5-O-(1-carboxyvinyl)-3-phosphoshikimate = chorismate + phosphate. It functions in the pathway metabolic intermediate biosynthesis; chorismate biosynthesis; chorismate from D-erythrose 4-phosphate and phosphoenolpyruvate: step 7/7. Its function is as follows. Catalyzes the anti-1,4-elimination of the C-3 phosphate and the C-6 proR hydrogen from 5-enolpyruvylshikimate-3-phosphate (EPSP) to yield chorismate, which is the branch point compound that serves as the starting substrate for the three terminal pathways of aromatic amino acid biosynthesis. This reaction introduces a second double bond into the aromatic ring system. This is Chorismate synthase from Geobacillus sp. (strain WCH70).